The sequence spans 265 residues: Membrane steroid-binding protein 2 (265 aa).

The helical transmembrane segment at 63–85 (WAAARSASPVAVIAAVAGAAVVY) threads the bilayer. The disordered stretch occupies residues 94-116 (PPPPPARPREEPSEEAPPPPEPV). Residues 118-217 (VGEITAEELL…SKYVKVGTIK (100 aa)) enclose the Cytochrome b5 heme-binding domain. Residues 120-217 (EITAEELLQY…SKYVKVGTIK (98 aa)) are steroid-binding.

Belongs to the cytochrome b5 family. MAPR subfamily.

The protein localises to the cell membrane. Its function is as follows. Binds multiple steroid compounds. This is Membrane steroid-binding protein 2 from Oryza sativa subsp. japonica (Rice).